The following is a 236-amino-acid chain: uncharacterized protein (236 aa).

The region spanning 117–160 (RYLSKQTDRNEFITTAESYIGISKHKSTNITYKLPLKEQFCNMS) is the RPE1 insert domain.

This is an uncharacterized protein from Rickettsia prowazekii (strain Madrid E).